The following is a 320-amino-acid chain: Ribonuclease Z (320 aa).

The Zn(2+) site is built by histidine 63, histidine 65, aspartate 67, histidine 68, histidine 141, aspartate 212, and histidine 270. Aspartate 67 serves as the catalytic Proton acceptor.

It belongs to the RNase Z family. As to quaternary structure, homodimer. It depends on Zn(2+) as a cofactor.

It carries out the reaction Endonucleolytic cleavage of RNA, removing extra 3' nucleotides from tRNA precursor, generating 3' termini of tRNAs. A 3'-hydroxy group is left at the tRNA terminus and a 5'-phosphoryl group is left at the trailer molecule.. Its function is as follows. Zinc phosphodiesterase, which displays some tRNA 3'-processing endonuclease activity. Probably involved in tRNA maturation, by removing a 3'-trailer from precursor tRNA. The polypeptide is Ribonuclease Z (Lacticaseibacillus casei (strain BL23) (Lactobacillus casei)).